Here is a 288-residue protein sequence, read N- to C-terminus: 4-diphosphocytidyl-2-C-methyl-D-erythritol kinase (288 aa).

Lysine 11 is a catalytic residue. Residue 95–105 (PVAAGMAGGSS) coordinates ATP. Aspartate 137 is a catalytic residue.

Belongs to the GHMP kinase family. IspE subfamily.

The enzyme catalyses 4-CDP-2-C-methyl-D-erythritol + ATP = 4-CDP-2-C-methyl-D-erythritol 2-phosphate + ADP + H(+). It functions in the pathway isoprenoid biosynthesis; isopentenyl diphosphate biosynthesis via DXP pathway; isopentenyl diphosphate from 1-deoxy-D-xylulose 5-phosphate: step 3/6. Functionally, catalyzes the phosphorylation of the position 2 hydroxy group of 4-diphosphocytidyl-2C-methyl-D-erythritol. The protein is 4-diphosphocytidyl-2-C-methyl-D-erythritol kinase of Lachnospira eligens (strain ATCC 27750 / DSM 3376 / VPI C15-48 / C15-B4) (Eubacterium eligens).